Reading from the N-terminus, the 349-residue chain is 11-beta-hydroxysteroid dehydrogenase A (349 aa).

Residues 10-30 (LVAPPFTFFFLCLFLPPYWGL) form a helical; Signal-anchor for type II membrane protein membrane-spanning segment. Positions 13–26 (PPFTFFFLCLFLPP) match the Proline-knob motif. NADP(+)-binding positions include 54 to 80 (GASSGIGEYLAYEYAKRGACLALSARR), aspartate 105, and 132 to 135 (NAAI). Serine 184 contributes to the substrate binding site. The Proton acceptor role is filled by tyrosine 197. Residues 197 to 201 (YSASK) and lysine 201 contribute to the NADP(+) site.

This sequence belongs to the short-chain dehydrogenases/reductases (SDR) family. As to expression, expressed in seeds (at protein level).

It localises to the lipid droplet. The protein localises to the membrane. The catalysed reaction is an 11beta-hydroxysteroid + NADP(+) = an 11-oxosteroid + NADPH + H(+). Functionally, has dehydrogenase activity against 11 beta-hydroxysteroid and 17 beta-hydroxysteroid. May be involved in signal transduction regulated by various sterols. In Arachis hypogaea (Peanut), this protein is 11-beta-hydroxysteroid dehydrogenase A.